The sequence spans 84 residues: Agaphelin (84 aa).

The first 26 residues, 1–26, serve as a signal peptide directing secretion; sequence MKMRVHLLAVSVLLVVLALQTTPAEA. The Kazal-like domain occupies 29–82; the sequence is NSEMATCACQLIYRPVCASNNESYSNECVLKCASETPTGRSIGLHKVKDGNCNG. 3 cysteine pairs are disulfide-bonded: cysteine 35–cysteine 60, cysteine 37–cysteine 56, and cysteine 45–cysteine 80. An N-linked (GlcNAc...) asparagine glycan is attached at asparagine 49.

As to quaternary structure, interacts with human ELANE.

It is found in the secreted. Functionally, functions as a slow and tight inhibitor of host neutrophil elastase (ELANE). Inhibits host proteinase 3 (PRTN3) and chymotrypsin. Does not inhibit other host proteases involved in coagulation or inflammation, such as cathepsin G (CTSG), trypsin, chymase, matriptase, beta-tryptase, kallikrein, urokinase-type plasminogen activator (PLAU), coagulation factors Xa (F10), XIa (F11), XIIa (F12), plasmin (PLG), thrombin (F2) and tissue-type plasminogen activator (PLAT). Inhibits host neutrophil chemotaxis induced by N-formylmethionine-leucyl-phenylalanine (fMLP) in vitro. Inhibits ELANE-mediated potentiation of platelet aggregation induced by CTSG in the host. Does not affect CTSG- or collagen-induced platelet aggregation. Blocks cleavage of tissue factor pathway inhibitor (TFPI) by ELANE in the host. Inhibits neutrophil-induced coagulation in the host by interfering with neutrophil extracellular traps (NET) formation. Exhibits anti-inflammatory activity. Reduces ischemia-induced activation of MAPK and NF-kappa-B pathways in the host. Decreases CCL2 and IL8 production in IL4- or lipopolysaccharide (LPS)-stimulated host epithelial cells. Reduces caspase-3 (CASP3)-dependent apoptosis in damaged host tissues. This Anopheles gambiae (African malaria mosquito) protein is Agaphelin.